Consider the following 218-residue polypeptide: Eukaryotic translation initiation factor 3 subunit K (218 aa).

A PCI domain is found at 44 to 205 (YDWGANLAVL…NIKTKNITEK (162 aa)).

This sequence belongs to the eIF-3 subunit K family. In terms of assembly, component of the eukaryotic translation initiation factor 3 (eIF-3) complex.

It localises to the cytoplasm. Functionally, component of the eukaryotic translation initiation factor 3 (eIF-3) complex, which is involved in protein synthesis of a specialized repertoire of mRNAs and, together with other initiation factors, stimulates binding of mRNA and methionyl-tRNAi to the 40S ribosome. The eIF-3 complex specifically targets and initiates translation of a subset of mRNAs involved in cell proliferation. The polypeptide is Eukaryotic translation initiation factor 3 subunit K (Bombyx mori (Silk moth)).